A 316-amino-acid polypeptide reads, in one-letter code: tRNA pseudouridine synthase B (316 aa).

Asp-47 (nucleophile) is an active-site residue.

The protein belongs to the pseudouridine synthase TruB family. Type 1 subfamily.

It catalyses the reaction uridine(55) in tRNA = pseudouridine(55) in tRNA. Responsible for synthesis of pseudouridine from uracil-55 in the psi GC loop of transfer RNAs. In Aliivibrio fischeri (strain ATCC 700601 / ES114) (Vibrio fischeri), this protein is tRNA pseudouridine synthase B.